Consider the following 113-residue polypeptide: Ig heavy chain V-III region T957 (113 aa).

The Ig-like domain occupies 1-113 (EVKLEESGGG…YWGQGTLVTV (113 aa)). A disulfide bond links Cys-22 and Cys-98.

The polypeptide is Ig heavy chain V-III region T957 (Mus musculus (Mouse)).